The sequence spans 514 residues: MGWLICFCVFAAIIIVALYLRKIHGFLVDDRAPPNLPSLPIIGSLLSINSNSPPHIFFQQLQKKYGDIYSLDMGSNRVIIVNNHHHAKEVLLRKGKIFAGRPRTVTTDILTRDGKDIAFGDYSATWKFHRKIVHGALCMFGEGTASIEKIICREASSMCEILTNLQSSAADLAPELTRAVTNVVCTLCFSSSYKRGDPEFEAMLKYSQGIVDTVAKDSLVDIFPWLQLFPNEDLRILRRCVSIRDKLLQKKYEEHKADFSDNIQRDLFDALLRAKNSSENNNTSTQDVGLTDDHLLMTVGDIFGAGVETTTTVLKWSILYLIHHPQVQRKIQEELDAKIGRDRHPQVNDRGNLPYLEATIREVLRIRPVSPLLIPHVALSDANIGEYTVQKGTRVIVNLWSLHHDEKEWKNPELFNPERFLNEEGNSLCCPSLSYLPFGAGVRVCLGEALAKLELFLFLSWILQRFTLEVPGGQPLPELQGKFRVVLQPQKYKVIARLRTGWEKSLQSQESESG.

Cys-445 is a heme binding site.

This sequence belongs to the cytochrome P450 family. Requires heme as cofactor.

Its subcellular location is the membrane. The enzyme catalyses a C21-steroid + reduced [NADPH--hemoprotein reductase] + O2 = a 17alpha-hydroxy-C21-steroid + oxidized [NADPH--hemoprotein reductase] + H2O + H(+). The catalysed reaction is 17alpha-hydroxyprogesterone + reduced [NADPH--hemoprotein reductase] + O2 = androst-4-ene-3,17-dione + acetate + oxidized [NADPH--hemoprotein reductase] + H2O + 2 H(+). It carries out the reaction 17alpha-hydroxypregnenolone + reduced [NADPH--hemoprotein reductase] + O2 = 3beta-hydroxyandrost-5-en-17-one + acetate + oxidized [NADPH--hemoprotein reductase] + H2O + 2 H(+). It functions in the pathway lipid metabolism; steroid biosynthesis. Its function is as follows. Conversion of pregnenolone and progesterone to their 17-alpha-hydroxylated products and subsequently to dehydroepiandrosterone (DHEA) and androstenedione. Catalyzes both the 17-alpha-hydroxylation and the 17,20-lyase reaction. The protein is Steroid 17-alpha-hydroxylase/17,20 lyase (cyp17a1) of Ictalurus punctatus (Channel catfish).